The sequence spans 232 residues: Probable transcriptional regulatory protein Bd1964 (232 aa).

It belongs to the TACO1 family.

The protein localises to the cytoplasm. This Bdellovibrio bacteriovorus (strain ATCC 15356 / DSM 50701 / NCIMB 9529 / HD100) protein is Probable transcriptional regulatory protein Bd1964.